The sequence spans 192 residues: Hydrogenase expression/formation protein HupD (192 aa).

3 residues coordinate Ni(2+): E23, D69, and H100.

Belongs to the peptidase A31 family.

Functionally, not known. Could be involved in the processing of hydrogenase. The polypeptide is Hydrogenase expression/formation protein HupD (hupD) (Bradyrhizobium diazoefficiens (strain JCM 10833 / BCRC 13528 / IAM 13628 / NBRC 14792 / USDA 110)).